Here is a 147-residue protein sequence, read N- to C-terminus: Protein PBDC1 homolog (147 aa).

Belongs to the PBDC1 family.

Its subcellular location is the cytoplasm. It is found in the nucleus. The protein is Protein PBDC1 homolog of Schizosaccharomyces pombe (strain 972 / ATCC 24843) (Fission yeast).